A 284-amino-acid polypeptide reads, in one-letter code: uncharacterized protein (284 aa).

Belongs to the methyltransferase superfamily.

The protein resides in the cytoplasm. It is found in the nucleus. Its function is as follows. Probable methyltransferase. This is an uncharacterized protein from Schizosaccharomyces pombe (strain 972 / ATCC 24843) (Fission yeast).